The following is a 337-amino-acid chain: ATP-dependent 6-phosphofructokinase (337 aa).

Glycine 11 is a binding site for ATP. Residue arginine 21–arginine 25 coordinates ADP. Residues arginine 72–tyrosine 73 and glycine 102–serine 105 each bind ATP. Aspartate 103 serves as a coordination point for Mg(2+). Threonine 125–aspartate 127 provides a ligand contact to substrate. The active-site Proton acceptor is the aspartate 127. Position 154 (arginine 154) interacts with ADP. Residues arginine 162 and methionine 169–arginine 171 contribute to the substrate site. ADP contacts are provided by residues glycine 185–aspartate 187, lysine 212, and lysine 214–histidine 216. Residues glutamate 223, arginine 245, and histidine 251–arginine 254 each bind substrate.

It belongs to the phosphofructokinase type A (PFKA) family. ATP-dependent PFK group I subfamily. Prokaryotic clade 'B1' sub-subfamily. As to quaternary structure, homotetramer. Requires Mg(2+) as cofactor.

Its subcellular location is the cytoplasm. It catalyses the reaction beta-D-fructose 6-phosphate + ATP = beta-D-fructose 1,6-bisphosphate + ADP + H(+). It functions in the pathway carbohydrate degradation; glycolysis; D-glyceraldehyde 3-phosphate and glycerone phosphate from D-glucose: step 3/4. Allosterically activated by ADP and other diphosphonucleosides, and allosterically inhibited by phosphoenolpyruvate. Functionally, catalyzes the phosphorylation of D-fructose 6-phosphate to fructose 1,6-bisphosphate by ATP, the first committing step of glycolysis. The protein is ATP-dependent 6-phosphofructokinase of Streptococcus pyogenes serotype M28 (strain MGAS6180).